The chain runs to 214 residues: Large ribosomal subunit protein uL3 (214 aa).

Residues 129 to 155 (FGRGPMSHGSKNHRRPGSVGAGTTPGR) are disordered.

Belongs to the universal ribosomal protein uL3 family. Part of the 50S ribosomal subunit. Forms a cluster with proteins L14 and L19.

Functionally, one of the primary rRNA binding proteins, it binds directly near the 3'-end of the 23S rRNA, where it nucleates assembly of the 50S subunit. In Synechococcus sp. (strain JA-3-3Ab) (Cyanobacteria bacterium Yellowstone A-Prime), this protein is Large ribosomal subunit protein uL3.